The following is a 1079-amino-acid chain: DNA-directed RNA polymerase subunit beta (1079 aa).

Residues 963-982 (RSTGPYSRVTQQPVKGRARR) are disordered. Residues 966–975 (GPYSRVTQQP) show a composition bias toward polar residues.

It belongs to the RNA polymerase beta chain family. In plastids the minimal PEP RNA polymerase catalytic core is composed of four subunits: alpha, beta, beta', and beta''. When a (nuclear-encoded) sigma factor is associated with the core the holoenzyme is formed, which can initiate transcription.

It is found in the plastid. The protein resides in the chloroplast. It catalyses the reaction RNA(n) + a ribonucleoside 5'-triphosphate = RNA(n+1) + diphosphate. In terms of biological role, DNA-dependent RNA polymerase catalyzes the transcription of DNA into RNA using the four ribonucleoside triphosphates as substrates. In Pelargonium hortorum (Common geranium), this protein is DNA-directed RNA polymerase subunit beta.